Here is a 343-residue protein sequence, read N- to C-terminus: 3-dehydroquinate synthase (343 aa).

Residues glycine 86–aspartate 90, threonine 110–threonine 111, lysine 123, and lysine 132 each bind NAD(+). 3 residues coordinate Zn(2+): glutamate 165, histidine 229, and histidine 243.

Belongs to the sugar phosphate cyclases superfamily. Dehydroquinate synthase family. Co(2+) serves as cofactor. Requires Zn(2+) as cofactor. It depends on NAD(+) as a cofactor.

The protein localises to the cytoplasm. The catalysed reaction is 7-phospho-2-dehydro-3-deoxy-D-arabino-heptonate = 3-dehydroquinate + phosphate. It participates in metabolic intermediate biosynthesis; chorismate biosynthesis; chorismate from D-erythrose 4-phosphate and phosphoenolpyruvate: step 2/7. In terms of biological role, catalyzes the conversion of 3-deoxy-D-arabino-heptulosonate 7-phosphate (DAHP) to dehydroquinate (DHQ). This chain is 3-dehydroquinate synthase, found in Pyrobaculum neutrophilum (strain DSM 2338 / JCM 9278 / NBRC 100436 / V24Sta) (Thermoproteus neutrophilus).